The primary structure comprises 179 residues: Large ribosomal subunit protein uL5 (179 aa).

Belongs to the universal ribosomal protein uL5 family. Part of the 50S ribosomal subunit; part of the 5S rRNA/L5/L18/L25 subcomplex. Contacts the 5S rRNA and the P site tRNA. Forms a bridge to the 30S subunit in the 70S ribosome.

Its function is as follows. This is one of the proteins that bind and probably mediate the attachment of the 5S RNA into the large ribosomal subunit, where it forms part of the central protuberance. In the 70S ribosome it contacts protein S13 of the 30S subunit (bridge B1b), connecting the 2 subunits; this bridge is implicated in subunit movement. Contacts the P site tRNA; the 5S rRNA and some of its associated proteins might help stabilize positioning of ribosome-bound tRNAs. This chain is Large ribosomal subunit protein uL5, found in Trichlorobacter lovleyi (strain ATCC BAA-1151 / DSM 17278 / SZ) (Geobacter lovleyi).